The sequence spans 695 residues: Lasso peptide isopeptidase AtxE2 (695 aa).

A signal peptide spans 1–30 (MRSSKIRCPGAIRVGTLVTAFGCLPHVAFA). 2 disulfide bridges follow: C296–C301 and C354–C363. The active-site Nucleophile is S527. A disulfide bridge links C551 with C552. Residues E610 and H638 each act as charge relay system in the active site.

The protein resides in the cytoplasm. Its function is as follows. Lasso peptide isopeptidase that specifically hydrolyzes Astexin-2 and Astexin-3, converting them to linear peptides. Has only a few specific contacts with substrates, because it recognizes Astexin knotted structure (principally the loop structure). Its binding to lasso peptides opens them to expose the isopeptide bonds for hydrolysis. This is Lasso peptide isopeptidase AtxE2 from Asticcacaulis excentricus (strain ATCC 15261 / DSM 4724 / KCTC 12464 / NCIMB 9791 / VKM B-1370 / CB 48).